Consider the following 782-residue polypeptide: DNA repair and recombination protein RAD54-like (782 aa).

Residues 1 to 20 (MRRSLAPSQRGGQRLSSRND) show a composition bias toward polar residues. Residues 1-28 (MRRSLAPSQRGGQRLSSRNDFTPPLLKK) form a disordered region. A required for chromatin remodeling, strand pairing activities and coupling of ATPase activity region spans residues 2-9 (RRSLAPSQ). Phosphothreonine is present on Thr22. The region spanning 168-343 (EGKRGNFNGC…FSLVNFVNPE (176 aa)) is the Helicase ATP-binding domain. 181-188 (DEMGLGKT) serves as a coordination point for ATP. The DEGH box signature appears at 294–297 (DEGH). The 158-residue stretch at 501 to 658 (LLDFMLAAIR…NNESAEKHFT (158 aa)) folds into the Helicase C-terminal domain. Positions 741–753 (SQKIEATPATETS) are enriched in polar residues. The tract at residues 741-782 (SQKIEATPATETSVEAKLEPERRKRPAMPLSDDSADEDFQGF) is disordered. Positions 773–782 (DSADEDFQGF) are enriched in acidic residues.

This sequence belongs to the SNF2/RAD54 helicase family. In terms of assembly, interacts (via N-terminus) with spn-A/Rad51.

It is found in the nucleus. Its function is as follows. Involved in mitotic DNA repair and meiotic recombination. Functions in the recombinational DNA repair pathway. Essential for interhomolog gene conversion (GC), but may have a less important role in intersister GC than spn-A/Rad51. In the presence of DNA, spn-A/Rad51 enhances the ATPase activity of okr/Rad54. The chain is DNA repair and recombination protein RAD54-like from Drosophila persimilis (Fruit fly).